Reading from the N-terminus, the 110-residue chain is Hydrogenase maturation factor HypA (110 aa).

Residue His2 coordinates Ni(2+). Positions 73, 76, 87, and 89 each coordinate Zn(2+).

Belongs to the HypA/HybF family.

Involved in the maturation of [NiFe] hydrogenases. Required for nickel insertion into the metal center of the hydrogenase. The chain is Hydrogenase maturation factor HypA from Archaeoglobus fulgidus (strain ATCC 49558 / DSM 4304 / JCM 9628 / NBRC 100126 / VC-16).